We begin with the raw amino-acid sequence, 310 residues long: Glycine-rich RNA-binding protein RZ1C (310 aa).

The RRM domain maps to S7 to P85. At S15 the chain carries Phosphoserine. The segment at R82 to G120 is disordered. Basic and acidic residues predominate over residues A83–R101. Over residues G111–G120 the composition is skewed to gly residues. The segment at C128 to S143 adopts a CCHC-type zinc-finger fold. The segment at R224–Y310 is disordered. Composition is skewed to basic and acidic residues over residues A226–D236 and D244–I253. Gly residues predominate over residues R261–G273. S295 is subject to Phosphoserine.

Expressed in roots, rosette and cauline leaves, stems, floral buds and flowers.

The protein localises to the nucleus. In terms of biological role, binds RNA and DNA sequences non-specifically. May be involved in tolerance to cold stress. This chain is Glycine-rich RNA-binding protein RZ1C, found in Arabidopsis thaliana (Mouse-ear cress).